A 333-amino-acid polypeptide reads, in one-letter code: Pollen allergen KBG 41 (333 aa).

A signal peptide spans 1–23; that stretch reads MAVHQYTVALFLAVALVAGPAAS. 2 consecutive repeat copies span residues 309–320 and 321–332. The 2 X 12 AA tandem repeats stretch occupies residues 309 to 332; that stretch reads TGAATAAAGGYKTGAATPTAGGYK.

The protein belongs to the Poa p IX/Phl p VI allergen family. As to expression, pollen.

This is Pollen allergen KBG 41 from Poa pratensis (Kentucky bluegrass).